The chain runs to 94 residues: uncharacterized protein (94 aa).

Positions 33–42 (INSLPTFTKP) are enriched in polar residues. The interval 33–57 (INSLPTFTKPNDSNNNVNKSSNDGV) is disordered. A compositionally biased stretch (low complexity) spans 43-57 (NDSNNNVNKSSNDGV).

This is an uncharacterized protein from Dictyostelium discoideum (Social amoeba).